Reading from the N-terminus, the 993-residue chain is Ephrin type-A receptor 7 (993 aa).

Residues 1 to 27 form the signal peptide; the sequence is MVLRSRLPPWIMLCSVWLLRFAHTGEA. Residues 28–550 are Extracellular-facing; that stretch reads QAAKEVILLD…TAVSSEQNPV (523 aa). In terms of domain architecture, Eph LBD spans 32 to 210; the sequence is EVILLDSKAQ…YYKKCWSIIE (179 aa). 2 consecutive Fibronectin type-III domains span residues 331–441 and 442–537; these read PPSA…TGQA and APSQ…TLEE. Residues asparagine 343 and asparagine 410 are each glycosylated (N-linked (GlcNAc...) asparagine). A helical transmembrane segment spans residues 551 to 571; it reads IIIAVVAVAGTIILVFMVFGF. Residues 572–993 lie on the Cytoplasmic side of the membrane; sequence IIGRRHCGYS…LHLHGTGIQV (422 aa). Tyrosine 603 and tyrosine 609 each carry phosphotyrosine; by autocatalysis. Residues 628 to 889 form the Protein kinase domain; that stretch reads IKIERVIGAG…QIVGILDKMI (262 aa). ATP-binding positions include 634–642 and lysine 660; that span reads IGAGEFGEV. Aspartate 753 serves as the catalytic Proton acceptor. Phosphotyrosine; by autocatalysis is present on residues tyrosine 786 and tyrosine 935. An SAM domain is found at 918–982; that stretch reads TTFCSVGEWL…MSSIQTMRAQ (65 aa). The PDZ-binding signature appears at 991–993; sequence IQV.

It belongs to the protein kinase superfamily. Tyr protein kinase family. Ephrin receptor subfamily. As to quaternary structure, heterotetramer upon binding of the ligand. The heterotetramer is composed of an ephrin dimer and a receptor dimer. Oligomerization is probably required to induce biological responses. In terms of processing, phosphorylated.

The protein localises to the cell membrane. It catalyses the reaction L-tyrosyl-[protein] + ATP = O-phospho-L-tyrosyl-[protein] + ADP + H(+). Its function is as follows. Receptor tyrosine kinase which binds promiscuously GPI-anchored ephrin-A family ligands residing on adjacent cells, leading to contact-dependent bidirectional signaling into neighboring cells. The signaling pathway downstream of the receptor is referred to as forward signaling while the signaling pathway downstream of the ephrin ligand is referred to as reverse signaling. Among GPI-anchored ephrin-A ligands, EFNA5 is a cognate/functional ligand for EPHA7 and their interaction regulates brain development modulating cell-cell adhesion and repulsion. Has a repellent activity on axons and is for instance involved in the guidance of corticothalamic axons and in the proper topographic mapping of retinal axons to the colliculus. May also regulate brain development through a caspase(CASP3)-dependent proapoptotic activity. Forward signaling may result in activation of components of the ERK signaling pathway including MAP2K1, MAP2K2, MAPK1 and MAPK3 which are phosphorylated upon activation of EPHA7. This is Ephrin type-A receptor 7 (EPHA7) from Gallus gallus (Chicken).